A 361-amino-acid polypeptide reads, in one-letter code: BBSome complex member bbs-5 (361 aa).

It belongs to the BBS5 family. In terms of assembly, part of BBSome complex, that contains at least bbs-1, bbs-2, bbs-4, bbs-5, osm-12, bbs-8/ttc-8 and bbs-9. Interacts with bbs-4 (via C-terminus); the interaction is direct.

Its subcellular location is the cell projection. It localises to the cilium membrane. The protein resides in the cytoplasm. It is found in the cytoskeleton. The protein localises to the cilium basal body. Its subcellular location is the microtubule organizing center. It localises to the centrosome. The protein resides in the centriolar satellite. In terms of biological role, component of the BBSome complex. The BBSome complex is thought to function as a coat complex required for sorting of specific membrane proteins to the primary cilia. The BBSome complex is required for ciliogenesis but is dispensable for centriolar satellite function. Required for BBSome complex ciliary localization but not for the proper complex assembly. Required, redundantly with bbs-4, for cilia biogenesis and both the assembly and movement of intraflagellar transport proteins along the ciliary axoneme. Plays a role in the removal of degraded mechanosensory receptors within the cilia. This is BBSome complex member bbs-5 from Caenorhabditis elegans.